The sequence spans 332 residues: Fructose-1,6-bisphosphatase class 1 (332 aa).

4 residues coordinate Mg(2+): glutamate 92, aspartate 113, leucine 115, and aspartate 116. Substrate contacts are provided by residues aspartate 116–serine 119, asparagine 209, tyrosine 242, and lysine 272. Residue glutamate 278 participates in Mg(2+) binding.

Belongs to the FBPase class 1 family. In terms of assembly, homotetramer. Mg(2+) serves as cofactor.

It is found in the cytoplasm. The enzyme catalyses beta-D-fructose 1,6-bisphosphate + H2O = beta-D-fructose 6-phosphate + phosphate. It functions in the pathway carbohydrate biosynthesis; Calvin cycle. This Prosthecochloris aestuarii (strain DSM 271 / SK 413) protein is Fructose-1,6-bisphosphatase class 1.